The chain runs to 484 residues: Glutamate--tRNA ligase (484 aa).

The 'HIGH' region signature appears at 11 to 21 (PSPTGLLHIGN). A 'KMSKS' region motif is present at residues 255–259 (KLSKR). K258 lines the ATP pocket.

This sequence belongs to the class-I aminoacyl-tRNA synthetase family. Glutamate--tRNA ligase type 1 subfamily. As to quaternary structure, monomer.

Its subcellular location is the cytoplasm. The enzyme catalyses tRNA(Glu) + L-glutamate + ATP = L-glutamyl-tRNA(Glu) + AMP + diphosphate. Catalyzes the attachment of glutamate to tRNA(Glu) in a two-step reaction: glutamate is first activated by ATP to form Glu-AMP and then transferred to the acceptor end of tRNA(Glu). The sequence is that of Glutamate--tRNA ligase from Streptococcus thermophilus (strain CNRZ 1066).